The primary structure comprises 409 residues: Imidazolonepropionase (409 aa).

Positions 78 and 80 each coordinate Fe(3+). Zn(2+) contacts are provided by His-78 and His-80. Residues Arg-87, Tyr-150, and His-183 each contribute to the 4-imidazolone-5-propanoate site. Tyr-150 contacts N-formimidoyl-L-glutamate. Residue His-248 participates in Fe(3+) binding. His-248 contributes to the Zn(2+) binding site. 4-imidazolone-5-propanoate is bound at residue Gln-251. Asp-323 is a binding site for Fe(3+). A Zn(2+)-binding site is contributed by Asp-323. 2 residues coordinate N-formimidoyl-L-glutamate: Asn-325 and Gly-327. Position 328 (Thr-328) interacts with 4-imidazolone-5-propanoate.

Belongs to the metallo-dependent hydrolases superfamily. HutI family. Zn(2+) serves as cofactor. Requires Fe(3+) as cofactor.

It localises to the cytoplasm. It catalyses the reaction 4-imidazolone-5-propanoate + H2O = N-formimidoyl-L-glutamate. It functions in the pathway amino-acid degradation; L-histidine degradation into L-glutamate; N-formimidoyl-L-glutamate from L-histidine: step 3/3. In terms of biological role, catalyzes the hydrolytic cleavage of the carbon-nitrogen bond in imidazolone-5-propanoate to yield N-formimidoyl-L-glutamate. It is the third step in the universal histidine degradation pathway. The sequence is that of Imidazolonepropionase from Mesorhizobium japonicum (strain LMG 29417 / CECT 9101 / MAFF 303099) (Mesorhizobium loti (strain MAFF 303099)).